Consider the following 89-residue polypeptide: Acylphosphatase (89 aa).

One can recognise an Acylphosphatase-like domain in the interval Ala-3–Pro-89. Residues Arg-18 and Asn-36 contribute to the active site.

This sequence belongs to the acylphosphatase family.

It carries out the reaction an acyl phosphate + H2O = a carboxylate + phosphate + H(+). The polypeptide is Acylphosphatase (acyP) (Pseudothermotoga lettingae (strain ATCC BAA-301 / DSM 14385 / NBRC 107922 / TMO) (Thermotoga lettingae)).